We begin with the raw amino-acid sequence, 194 residues long: Mitochondrial inner membrane protease ATP23 (194 aa).

Residues 1 to 20 (MEDAAAPNSGSEFNPGARRG) form a disordered region. Zn(2+) is bound at residue His-96. The active site involves Glu-97. His-100 serves as a coordination point for Zn(2+).

The protein belongs to the peptidase M76 family.

The protein resides in the mitochondrion inner membrane. Has a dual role in the assembly of mitochondrial ATPase. Acts as a protease that removes the N-terminal 10 residues of mitochondrial ATPase CF(0) subunit 6 (ATP6) at the intermembrane space side. Also involved in the correct assembly of the membrane-embedded ATPase CF(0) particle, probably mediating association of ATP6 with the subunit 9 ring. This is Mitochondrial inner membrane protease ATP23 from Arabidopsis thaliana (Mouse-ear cress).